A 228-amino-acid polypeptide reads, in one-letter code: 2,3-bisphosphoglycerate-dependent phosphoglycerate mutase (228 aa).

Substrate is bound by residues 8-15, 21-22, arginine 60, 87-90, lysine 98, 114-115, and 183-184; these read RHGQSEWN, TG, ERHY, RR, and GN. The active-site Tele-phosphohistidine intermediate is histidine 9. Glutamate 87 serves as the catalytic Proton donor/acceptor.

This sequence belongs to the phosphoglycerate mutase family. BPG-dependent PGAM subfamily.

It catalyses the reaction (2R)-2-phosphoglycerate = (2R)-3-phosphoglycerate. Its pathway is carbohydrate degradation; glycolysis; pyruvate from D-glyceraldehyde 3-phosphate: step 3/5. In terms of biological role, catalyzes the interconversion of 2-phosphoglycerate and 3-phosphoglycerate. This Staphylococcus aureus (strain MRSA252) protein is 2,3-bisphosphoglycerate-dependent phosphoglycerate mutase.